We begin with the raw amino-acid sequence, 415 residues long: Lipid II:glycine glycyltransferase (415 aa).

It belongs to the FemABX family.

It localises to the cytoplasm. It catalyses the reaction beta-D-GlcNAc-(1-&gt;4)-Mur2Ac(oyl-L-Ala-D-isoglutaminyl-L-Lys-D-Ala-D-Ala)-di-trans,octa-cis-undecaprenyl diphosphate + glycyl-tRNA(Gly) = beta-D-GlcNAc-(1-&gt;4)-Mur2Ac(oyl-L-Ala-D-isoglutaminyl-L-Lys-(N(6)-Gly)-D-Ala-D-Ala)-di-trans,octa-cis-undecaprenyl diphosphate + tRNA(Gly) + H(+). Its function is as follows. Catalyzes the incorporation of amino acid(s) into the interchain peptide bridge of peptidoglycan, using aminoacyl-tRNA as amino acid donor. The protein is Lipid II:glycine glycyltransferase (femX) of Staphylococcus saprophyticus subsp. saprophyticus (strain ATCC 15305 / DSM 20229 / NCIMB 8711 / NCTC 7292 / S-41).